The chain runs to 473 residues: Xylan O-acetyltransferase 14 (473 aa).

Positions 1–17 (MTTTGSTPPRKNRSNVT) are enriched in polar residues. The tract at residues 1-22 (MTTTGSTPPRKNRSNVTGGEGG) is disordered. Residues 1–54 (MTTTGSTPPRKNRSNVTGGEGGSLEEYAWRAAGEAAAAKKATRAWGVSVSLRSH) lie on the Cytoplasmic side of the membrane. Residues 55 to 75 (FSSLVLLLLLLLVALAVSATT) traverse the membrane as a helical; Signal-anchor for type II membrane protein segment. The segment at 76 to 101 (KNGDPAETPHAPPLPPPASIKLPSSS) is disordered. Residues 76–473 (KNGDPAETPH…NQLLYAHIVS (398 aa)) are Lumenal-facing. Disulfide bonds link Cys108–Cys159, Cys130–Cys195, Cys139–Cys455, and Cys370–Cys451. The short motif at 182–184 (GDS) is the GDS motif element. The active-site Nucleophile is the Ser184. N-linked (GlcNAc...) asparagine glycans are attached at residues Asn209, Asn223, and Asn414. Asp450 acts as the Proton donor in catalysis. Positions 450–453 (DCIH) match the DXXH motif motif. The Proton acceptor role is filled by His453.

It belongs to the PC-esterase family. TBL subfamily.

The protein resides in the golgi apparatus membrane. In terms of biological role, xylan acetyltransferase required for 2-O- and 3-O-monoacetylation of xylosyl residues in xylan. Catalyzes the 2-O-acetylation of xylan, followed by nonenzymatic acetyl migration to the O-3 position, resulting in products that are monoacetylated at both O-2 and O-3 positions. This is Xylan O-acetyltransferase 14 from Oryza sativa subsp. japonica (Rice).